The chain runs to 560 residues: 2-succinyl-5-enolpyruvyl-6-hydroxy-3-cyclohexene-1-carboxylate synthase (560 aa).

This sequence belongs to the TPP enzyme family. MenD subfamily. In terms of assembly, homodimer. Mg(2+) is required as a cofactor. Requires Mn(2+) as cofactor. The cofactor is thiamine diphosphate.

It carries out the reaction isochorismate + 2-oxoglutarate + H(+) = 5-enolpyruvoyl-6-hydroxy-2-succinyl-cyclohex-3-ene-1-carboxylate + CO2. It participates in quinol/quinone metabolism; 1,4-dihydroxy-2-naphthoate biosynthesis; 1,4-dihydroxy-2-naphthoate from chorismate: step 2/7. It functions in the pathway quinol/quinone metabolism; menaquinone biosynthesis. In terms of biological role, catalyzes the thiamine diphosphate-dependent decarboxylation of 2-oxoglutarate and the subsequent addition of the resulting succinic semialdehyde-thiamine pyrophosphate anion to isochorismate to yield 2-succinyl-5-enolpyruvyl-6-hydroxy-3-cyclohexene-1-carboxylate (SEPHCHC). This is 2-succinyl-5-enolpyruvyl-6-hydroxy-3-cyclohexene-1-carboxylate synthase from Staphylococcus saprophyticus subsp. saprophyticus (strain ATCC 15305 / DSM 20229 / NCIMB 8711 / NCTC 7292 / S-41).